A 355-amino-acid polypeptide reads, in one-letter code: tRNA pseudouridine synthase D (355 aa).

The active-site Nucleophile is the aspartate 84. The TRUD domain maps to 160 to 306 (GVPNYFGLQR…MAHERRILRL (147 aa)).

Belongs to the pseudouridine synthase TruD family.

The enzyme catalyses uridine(13) in tRNA = pseudouridine(13) in tRNA. In terms of biological role, responsible for synthesis of pseudouridine from uracil-13 in transfer RNAs. This is tRNA pseudouridine synthase D from Pseudomonas aeruginosa (strain ATCC 15692 / DSM 22644 / CIP 104116 / JCM 14847 / LMG 12228 / 1C / PRS 101 / PAO1).